A 616-amino-acid polypeptide reads, in one-letter code: Pentatricopeptide repeat-containing protein At4g15720 (616 aa).

PPR repeat units lie at residues 63–93, 94–128, 130–164, 165–199, 200–228, 235–269, 270–300, 301–335, 336–371, and 372–402; these read DTFTVNHLVISYVKLKEINTARKLFDEMCEP, NVVSWTSVISGYNDMGKPQNALSMFQKMHEDRPVP, NEYTFASVFKACSALAESRIGKNIHARLEISGLRR, NIVVSSSLVDMYGKCNDVETARRVFDSMIGYGRNV, VSWTSMITAYAQNARGHEAIELFRSFNAA, NQFMLASVISACSSLGRLQWGKVAHGLVTRGGYES, NTVVATSLLDMYAKCGSLSCAEKIFLRIRCH, SVISYTSMIMAKAKHGLGEAAVKLFDEMVAGRINP, NYVTLLGVLHACSHSGLVNEGLEYLSLMAEKYGVVP, and DSRHYTCVVDMLGRFGRVDEAYELAKTIEVG. Residues 409–484 are type E motif; it reads LWGALLSAGR…ERACSWIENK (76 aa). A type E(+) motif region spans residues 485–515; sequence DSVYVFHAGDLSCDESGEIERFLKDLEKRMK. The interval 522–616 is type DYW motif; it reads SSSMITTSSS…NGSCTCRDYW (95 aa).

It belongs to the PPR family. PCMP-H subfamily.

The protein is Pentatricopeptide repeat-containing protein At4g15720 (PCMP-H1) of Arabidopsis thaliana (Mouse-ear cress).